The sequence spans 273 residues: Non-homologous end joining protein Ku (273 aa).

One can recognise a Ku domain in the interval 13-190; sequence KLSLVTCPVA…FTGIEKKSDA (178 aa). Residues 227 to 251 form a disordered region; sequence KKKAKKPSKAKASKSTKGDDEEKSN. Residues 228–240 are compositionally biased toward basic residues; that stretch reads KKAKKPSKAKASK.

It belongs to the prokaryotic Ku family. Homodimer. Interacts with LigD.

In terms of biological role, with LigD forms a non-homologous end joining (NHEJ) DNA repair enzyme, which repairs dsDNA breaks with reduced fidelity. Binds linear dsDNA with 5'- and 3'- overhangs but not closed circular dsDNA nor ssDNA. Recruits and stimulates the ligase activity of LigD. This is Non-homologous end joining protein Ku from Allorhizobium ampelinum (strain ATCC BAA-846 / DSM 112012 / S4) (Agrobacterium vitis (strain S4)).